The sequence spans 557 residues: Probable WRKY transcription factor 20 (557 aa).

Over residues 1-12 (MNPQANDRKEFQ) the composition is skewed to basic and acidic residues. 2 disordered regions span residues 1-36 (MNPQ…GGGA) and 76-215 (KPEP…DGYN). Residues 95-114 (SASSSSYTGRGFHQNTFTEQ) show a composition bias toward polar residues. The span at 151–169 (SSHSPSSISDAAGSSSELS) shows a compositional bias: low complexity. Polar residues predominate over residues 193 to 207 (SIQTSQNDSRGSTPS). Residues 205-269 (TPSILADDGY…YKGTHDHPKP (65 aa)) constitute a DNA-binding region (WRKY 1). Residues C236, C241, H264, and H266 each coordinate Zn(2+). Positions 257–348 (DIIYKGTHDH…PDDDDPFSKR (92 aa)) are disordered. Over residues 282 to 299 (QEERLDKYPSSTGRDEKG) the composition is skewed to basic and acidic residues. A compositionally biased stretch (polar residues) spans 303–314 (YNLSNPNEQTGN). Over residues 321–332 (SASDDGGEAAAS) the composition is skewed to low complexity. The segment at residues 375–440 (SEVDILDDGY…YEGKHDHDVP (66 aa)) is a DNA-binding region (WRKY 2). The Zn(2+) site is built by C406, C411, H435, and H437. Disordered stretches follow at residues 433 to 486 (GKHD…QHQN) and 520 to 557 (NQYG…QSGP). Positions 520–536 (NQYGQRETKNETQNGDI) are enriched in polar residues.

It belongs to the WRKY group I family.

The protein resides in the nucleus. Functionally, transcription factor. Interacts specifically with the W box (5'-(T)TGAC[CT]-3'), a frequently occurring elicitor-responsive cis-acting element. The protein is Probable WRKY transcription factor 20 (WRKY20) of Arabidopsis thaliana (Mouse-ear cress).